The sequence spans 244 residues: Probable proteasome subunit alpha type-1 (244 aa).

It belongs to the peptidase T1A family. The 26S proteasome consists of a 20S proteasome core and two 19S regulatory subunits. The 20S proteasome core is composed of 28 subunits that are arranged in four stacked rings, resulting in a barrel-shaped structure. The two end rings are each formed by seven alpha subunits, and the two central rings are each formed by seven beta subunits. The catalytic chamber with the active sites is on the inside of the barrel.

It localises to the cytoplasm. Its subcellular location is the nucleus. The proteasome is a multicatalytic proteinase complex which is characterized by its ability to cleave peptides with Arg, Phe, Tyr, Leu, and Glu adjacent to the leaving group at neutral or slightly basic pH. The proteasome has an ATP-dependent proteolytic activity. In Schizosaccharomyces pombe (strain 972 / ATCC 24843) (Fission yeast), this protein is Probable proteasome subunit alpha type-1.